A 564-amino-acid chain; its full sequence is Laccase-22 (564 aa).

The N-terminal stretch at 1–25 is a signal peptide; it reads MAVLPESRRLSLLLMAACFLLQALS. Plastocyanin-like domains lie at 36 to 152 and 162 to 314; these read NVVM…PKLG and KEAV…YANT. N-linked (GlcNAc...) asparagine glycans are attached at residues Asn-41 and Asn-82. Cu cation-binding residues include His-86 and His-88. N-linked (GlcNAc...) asparagine glycosylation is present at Asn-118. Cu cation-binding residues include His-131 and His-133. N-linked (GlcNAc...) asparagine glycosylation is found at Asn-191, Asn-302, Asn-331, Asn-379, Asn-389, Asn-424, Asn-437, and Asn-447. Residues 414–548 enclose the Plastocyanin-like 3 domain; that stretch reads DFPATPLHKF…KMAFVVDNGK (135 aa). The Cu cation site is built by His-465, His-468, His-470, His-527, Cys-528, His-529, and His-533.

This sequence belongs to the multicopper oxidase family. Cu cation is required as a cofactor.

The protein localises to the secreted. Its subcellular location is the extracellular space. It localises to the apoplast. The enzyme catalyses 4 hydroquinone + O2 = 4 benzosemiquinone + 2 H2O. Functionally, lignin degradation and detoxification of lignin-derived products. This is Laccase-22 (LAC22) from Oryza sativa subsp. japonica (Rice).